Consider the following 285-residue polypeptide: Type II restriction enzyme Cfr10I (285 aa).

D134 and E204 together coordinate Mg(2+).

Homodimer. The cofactor is Mg(2+).

The enzyme catalyses Endonucleolytic cleavage of DNA to give specific double-stranded fragments with terminal 5'-phosphates.. In terms of biological role, an F and P subtype restriction enzyme that recognizes the double-stranded sequence 5'-RCCGGY-3' and cleaves after R-1. The chain is Type II restriction enzyme Cfr10I (cfr10IR) from Citrobacter freundii.